The following is a 585-amino-acid chain: Frizzled-5 (585 aa).

Positions 1-26 are cleaved as a signal peptide; it reads MARPDPSAPPSLLLLLLAQLVGRAAA. Over 27–238 the chain is Extracellular; it reads ASKAPVCQEI…PDERTFATFW (212 aa). Positions 28–150 constitute an FZ domain; the sequence is SKAPVCQEIT…GDAEVLCMDY (123 aa). 5 cysteine pairs are disulfide-bonded: cysteine 33–cysteine 94, cysteine 41–cysteine 87, cysteine 78–cysteine 116, cysteine 105–cysteine 147, and cysteine 109–cysteine 133. Asparagine 47 carries an N-linked (GlcNAc...) asparagine glycan. An N-linked (GlcNAc...) asparagine glycan is attached at asparagine 151. The tract at residues 156–182 is disordered; it reads TTASPKSFPAKPTLPGPPGAPSSGGEC. A helical transmembrane segment spans residues 239 to 259; the sequence is IGLWSVLCFISTSTTVATFLI. Residues 260–270 lie on the Cytoplasmic side of the membrane; the sequence is DMERFRYPERP. The chain crosses the membrane as a helical span at residues 271–291; the sequence is IIFLSACYLCVSLGFLVRLVV. Topologically, residues 292–315 are extracellular; the sequence is GHASVACSREHSHIHYETTGPALC. A helical transmembrane segment spans residues 316-336; the sequence is TVVFLLVYFFGMASSIWWVIL. Topologically, residues 337 to 358 are cytoplasmic; it reads SLTWFLAAGMKWGNEAIAGYAQ. Residues 359 to 379 traverse the membrane as a helical segment; it reads YFHLAAWLIPSVKSITALALS. At 380–402 the chain is on the extracellular side; the sequence is SVDGDPVAGICYVGNQNLNSLRG. A helical membrane pass occupies residues 403–423; sequence FVLGPLVLYLLVGTLFLLAGF. Topologically, residues 424-449 are cytoplasmic; that stretch reads VSLFRIRSVIKQGGTKTDKLEKLMIR. Residues 450–470 traverse the membrane as a helical segment; it reads IGIFTLLYTVPASIVVACYLY. Over 471–500 the chain is Extracellular; the sequence is EQHYRESWEAALTCACPGPDAGQPRAKPEY. A helical transmembrane segment spans residues 501 to 521; it reads WVLMLKYFMCLVVGITSGVWI. Over 522–585 the chain is Cytoplasmic; it reads WSGKTLESWR…YHKQVSLSHV (64 aa). Residues 582–584 carry the PDZ-binding motif; it reads LSH.

Belongs to the G-protein coupled receptor Fz/Smo family. Binding of unsaturated fatty acid molecules (via FZ domain) promotes homodimerization (via FZ domain). Interacts with WNT2B. Interacts with WNT7A. Interacts with GOPC. Ubiquitinated by RNF43 and ZNRF3, leading to its degradation by the proteasome. Detected in hippocampus (at protein level). Expressed in eye, kidney, lung, chondrocytes, epithelial cells of the small intestine and gobelet cells of the colon.

It localises to the cell membrane. Its subcellular location is the golgi apparatus membrane. The protein resides in the synapse. The protein localises to the perikaryon. It is found in the cell projection. It localises to the dendrite. Its subcellular location is the axon. Functionally, receptor for Wnt proteins. Functions in the canonical Wnt/beta-catenin signaling pathway. In vitro activates WNT2, WNT10B, WNT5A, but not WNT2B or WNT4 signaling. In neurons, activation by WNT7A promotes formation of synapses. May be involved in transduction and intercellular transmission of polarity information during tissue morphogenesis and/or in differentiated tissues. Plays a role in yolk sac angiogenesis and in placental vascularization. Plays a role in ocular development. This Mus musculus (Mouse) protein is Frizzled-5 (Fzd5).